The chain runs to 117 residues: Large ribosomal subunit protein uL18 (117 aa).

Belongs to the universal ribosomal protein uL18 family. Part of the 50S ribosomal subunit; part of the 5S rRNA/L5/L18/L25 subcomplex. Contacts the 5S and 23S rRNAs.

This is one of the proteins that bind and probably mediate the attachment of the 5S RNA into the large ribosomal subunit, where it forms part of the central protuberance. This chain is Large ribosomal subunit protein uL18, found in Idiomarina loihiensis (strain ATCC BAA-735 / DSM 15497 / L2-TR).